A 132-amino-acid chain; its full sequence is DNA-directed RNA polymerase subunit omega (132 aa).

Belongs to the RNA polymerase subunit omega family. In terms of assembly, the RNAP catalytic core consists of 2 alpha, 1 beta, 1 beta' and 1 omega subunit. When a sigma factor is associated with the core the holoenzyme is formed, which can initiate transcription.

It catalyses the reaction RNA(n) + a ribonucleoside 5'-triphosphate = RNA(n+1) + diphosphate. In terms of biological role, promotes RNA polymerase assembly. Latches the N- and C-terminal regions of the beta' subunit thereby facilitating its interaction with the beta and alpha subunits. In Bartonella bacilliformis (strain ATCC 35685 / KC583 / Herrer 020/F12,63), this protein is DNA-directed RNA polymerase subunit omega.